A 264-amino-acid chain; its full sequence is uncharacterized protein (264 aa).

Residues 57-264 are disordered; it reads RPPASPCPPR…VYPHPHLTAT (208 aa). Residues 140-153 show a composition bias toward basic residues; that stretch reads GKARRSPGRRRHPH. Low complexity predominate over residues 154-165; it reads SSFPQASSPSSP.

This is an uncharacterized protein from Homo sapiens (Human).